We begin with the raw amino-acid sequence, 360 residues long: Phosphoserine aminotransferase (360 aa).

Arg42 is a binding site for L-glutamate. Pyridoxal 5'-phosphate contacts are provided by residues 76-77, Trp102, Thr152, Asp171, and Gln194; that span reads AS. Lys195 carries the post-translational modification N6-(pyridoxal phosphate)lysine. Position 236 to 237 (236 to 237) interacts with pyridoxal 5'-phosphate; sequence NT.

The protein belongs to the class-V pyridoxal-phosphate-dependent aminotransferase family. SerC subfamily. In terms of assembly, homodimer. Pyridoxal 5'-phosphate is required as a cofactor.

The protein resides in the cytoplasm. It carries out the reaction O-phospho-L-serine + 2-oxoglutarate = 3-phosphooxypyruvate + L-glutamate. The enzyme catalyses 4-(phosphooxy)-L-threonine + 2-oxoglutarate = (R)-3-hydroxy-2-oxo-4-phosphooxybutanoate + L-glutamate. It participates in amino-acid biosynthesis; L-serine biosynthesis; L-serine from 3-phospho-D-glycerate: step 2/3. Catalyzes the reversible conversion of 3-phosphohydroxypyruvate to phosphoserine and of 3-hydroxy-2-oxo-4-phosphonooxybutanoate to phosphohydroxythreonine. This chain is Phosphoserine aminotransferase, found in Geobacillus kaustophilus (strain HTA426).